Reading from the N-terminus, the 634-residue chain is Phospholipase B (634 aa).

The first 19 residues, 1–19 (MSIITTAFALSLLATTAFA), serve as a signal peptide directing secretion. Residues 46-569 (DCPSNVTWIR…DTWCWAGDDN (524 aa)) form the PLA2c domain. 17 N-linked (GlcNAc...) asparagine glycosylation sites follow: Asn50, Asn56, Asn122, Asn231, Asn246, Asn269, Asn311, Asn340, Asn384, Asn430, Asn478, Asn498, Asn525, Asn550, Asn569, Asn591, and Asn603.

Belongs to the lysophospholipase family. N-glycosylated.

It is found in the secreted. It catalyses the reaction a 1-acyl-sn-glycero-3-phosphocholine + H2O = sn-glycerol 3-phosphocholine + a fatty acid + H(+). Functionally, exhibits phospholipase B (PLB), lysophospholipase (LPL) and lysophospholipase/transacylase (LPTA) activities. This is Phospholipase B (PLB1) from Cryptococcus neoformans var. neoformans serotype D (strain JEC21 / ATCC MYA-565) (Filobasidiella neoformans).